A 226-amino-acid chain; its full sequence is MDELKKLAGVYAAGFVEDGMVVGLGTGSTAYFFVEEIGRRIKEEGLSVVGVTTSTQTTKQAEGLGIPLKSVDDIDSIDVTVDGADEVDPQLNGIKGGGGALLMEKIVATPTKKYIWVVDESKMVDQLGAFKLPVEVVQYGADRLYLDFESKGYKPSFRVTEQGDRFVTDMKNFIIDLDLGKINNPVALGDELKAMTGVVEHGLFNGMVNKVIVAGKDGVKIVEVKD.

Substrate contacts are provided by residues 26–29 (TGST), 82–85 (DGAD), and 95–98 (KGGG). The active-site Proton acceptor is E104. Residue K122 coordinates substrate.

The protein belongs to the ribose 5-phosphate isomerase family. In terms of assembly, homodimer.

It carries out the reaction aldehydo-D-ribose 5-phosphate = D-ribulose 5-phosphate. The protein operates within carbohydrate degradation; pentose phosphate pathway; D-ribose 5-phosphate from D-ribulose 5-phosphate (non-oxidative stage): step 1/1. In terms of biological role, catalyzes the reversible conversion of ribose-5-phosphate to ribulose 5-phosphate. This Streptococcus thermophilus (strain ATCC BAA-250 / LMG 18311) protein is Ribose-5-phosphate isomerase A.